A 240-amino-acid polypeptide reads, in one-letter code: tRNA pseudouridine synthase B (240 aa).

D48 functions as the Nucleophile in the catalytic mechanism.

This sequence belongs to the pseudouridine synthase TruB family. Type 1 subfamily.

It carries out the reaction uridine(55) in tRNA = pseudouridine(55) in tRNA. Responsible for synthesis of pseudouridine from uracil-55 in the psi GC loop of transfer RNAs. The sequence is that of tRNA pseudouridine synthase B from Bacteroides thetaiotaomicron (strain ATCC 29148 / DSM 2079 / JCM 5827 / CCUG 10774 / NCTC 10582 / VPI-5482 / E50).